Here is a 2772-residue protein sequence, read N- to C-terminus: Protein DDB_G0276689 (2772 aa).

Disordered stretches follow at residues 50 to 82 (QQLKNQQKQTQSDNNNNNNNNNNNNNNNNNNNN), 371 to 415 (NLET…NGKS), 475 to 514 (LDINSKNNNNDNNNNNNNNSSSSGSNSSSSRNKNNLKNNL), 612 to 650 (NKNNNNNNNNNNNNNNNNNNNNNNNNNNNNNNNNNNNNE), 685 to 708 (LRGSFSPSSMSPSIPPSASNDSSL), and 933 to 982 (LVNN…NNSN). 4 stretches are compositionally biased toward low complexity: residues 376-412 (NNNNNNNNNNNNNNNNNNNNNNNNNNNNNNNNNNNNN), 478-514 (NSKNNNNDNNNNNNNNSSSSGSNSSSSRNKNNLKNNL), 614-649 (NNNNNNNNNNNNNNNNNNNNNNNNNNNNNNNNNNNN), and 688-708 (SFSPSSMSPSIPPSASNDSSL). The stretch at 1065–1089 (LSKWILNLDDNNYNHIPFMSLVLMP) is one LRR 1 repeat. The tract at residues 1282-1319 (NNNNIDNNNNNNNNNNNNNNNNNNNNNNNNNNNNNNNN) is disordered. LRR repeat units follow at residues 1393-1416 (LSNLLQVDLSDLIISSISHTTPKN) and 1543-1567 (HKDVEPFIQFSIENSKKLPSNSFSN). The segment covering 1587–1619 (QNNNYNNNNYNNNYNNNNNNNNNNNNNNNNNNN) has biased composition (low complexity). The disordered stretch occupies residues 1587-1622 (QNNNYNNNNYNNNYNNNNNNNNNNNNNNNNNNNIDN). The stretch at 1899-1922 (LEELTKQEIGYQVLLVLPTDLQVE) is one LRR 4 repeat. 2 stretches are compositionally biased toward polar residues: residues 1999-2011 (YVSNNNYNKNDQI) and 2073-2083 (LNIVHSTSPNS). 3 disordered regions span residues 1999–2021 (YVSNNNYNKNDQINSKEKDKDKK), 2054–2083 (EISNRSSTPPPPPPTETPSLNIVHSTSPNS), and 2367–2386 (NNSSNNSNNNNNTNNNNNNN). An LRR 5 repeat occupies 2414-2439 (TTIINNIEMDKNRLDEAIYYLKKYGN).

The sequence is that of Protein DDB_G0276689 from Dictyostelium discoideum (Social amoeba).